A 405-amino-acid polypeptide reads, in one-letter code: Arginine biosynthesis bifunctional protein ArgJ (405 aa).

The substrate site is built by threonine 155, lysine 181, threonine 192, glutamate 278, asparagine 400, and threonine 405. The active-site Nucleophile is threonine 192.

Belongs to the ArgJ family. Heterotetramer of two alpha and two beta chains.

The protein localises to the cytoplasm. It catalyses the reaction N(2)-acetyl-L-ornithine + L-glutamate = N-acetyl-L-glutamate + L-ornithine. The catalysed reaction is L-glutamate + acetyl-CoA = N-acetyl-L-glutamate + CoA + H(+). It participates in amino-acid biosynthesis; L-arginine biosynthesis; L-ornithine and N-acetyl-L-glutamate from L-glutamate and N(2)-acetyl-L-ornithine (cyclic): step 1/1. Its pathway is amino-acid biosynthesis; L-arginine biosynthesis; N(2)-acetyl-L-ornithine from L-glutamate: step 1/4. Its function is as follows. Catalyzes two activities which are involved in the cyclic version of arginine biosynthesis: the synthesis of N-acetylglutamate from glutamate and acetyl-CoA as the acetyl donor, and of ornithine by transacetylation between N(2)-acetylornithine and glutamate. This is Arginine biosynthesis bifunctional protein ArgJ from Dehalococcoides mccartyi (strain CBDB1).